Reading from the N-terminus, the 198-residue chain is 3-isopropylmalate dehydratase small subunit (198 aa).

Belongs to the LeuD family. LeuD type 1 subfamily. As to quaternary structure, heterodimer of LeuC and LeuD.

The enzyme catalyses (2R,3S)-3-isopropylmalate = (2S)-2-isopropylmalate. Its pathway is amino-acid biosynthesis; L-leucine biosynthesis; L-leucine from 3-methyl-2-oxobutanoate: step 2/4. Catalyzes the isomerization between 2-isopropylmalate and 3-isopropylmalate, via the formation of 2-isopropylmaleate. This is 3-isopropylmalate dehydratase small subunit from Mycobacterium marinum (strain ATCC BAA-535 / M).